A 485-amino-acid polypeptide reads, in one-letter code: NADH-quinone oxidoreductase subunit N (485 aa).

Helical transmembrane passes span 8–28, 35–55, 71–91, 105–125, 127–147, 159–179, 203–223, 235–255, 271–291, 297–317, 326–346, 373–393, 408–430, and 455–475; these read LIALLPLLIVGLTVVVVMLSI, FLNATLSVIGLNAALVSLWFV, GFAMLYTGLVQVASLATCTFA, FYLLVLIASLGGILLANANHL, ALFLGIELISLPLFGLIGYAF, YTILSAAASSFLLFGMALVYA, LLAGFGLMIVGLGFKLSLVPF, PAPVSTFLATASKIAIFGVVM, VVLGIIAFASIIFGNLMALSQ, LLGYSSISHLGYLLVALIALQ, VGVYLAGYLFSSLGAFGVVSL, AAVMTVMMLSLAGIPMTLGFI, WWLVAAVVVGSAIGLYYYLRVAV, and IVVLISALLVLVLGVWPQPLI.

It belongs to the complex I subunit 2 family. NDH-1 is composed of 13 different subunits. Subunits NuoA, H, J, K, L, M, N constitute the membrane sector of the complex.

The protein localises to the cell inner membrane. The enzyme catalyses a quinone + NADH + 5 H(+)(in) = a quinol + NAD(+) + 4 H(+)(out). NDH-1 shuttles electrons from NADH, via FMN and iron-sulfur (Fe-S) centers, to quinones in the respiratory chain. The immediate electron acceptor for the enzyme in this species is believed to be ubiquinone. Couples the redox reaction to proton translocation (for every two electrons transferred, four hydrogen ions are translocated across the cytoplasmic membrane), and thus conserves the redox energy in a proton gradient. This chain is NADH-quinone oxidoreductase subunit N, found in Salmonella gallinarum (strain 287/91 / NCTC 13346).